Consider the following 341-residue polypeptide: Fe-S cluster assembly protein DRE2 (341 aa).

The N-terminal SAM-like domain stretch occupies residues 1–157; the sequence is MNTLLLLHPT…FKKLSSPPTL (157 aa). The disordered stretch occupies residues 151-171; sequence LSSPPTLTDSSEADEDEESQL. The tract at residues 157-204 is linker; that stretch reads LTDSSEADEDEESQLNEKLKGSKLIYFDESSDDEIIDEDELLRDDDGA. A compositionally biased stretch (acidic residues) spans 161–170; that stretch reads SEADEDEESQ. [2Fe-2S] cluster is bound by residues Cys215, Cys227, Cys230, and Cys232. Positions 215–232 are fe-S binding site A; that stretch reads CALPNGKRRKKACKDCTC. 4 residues coordinate [4Fe-4S] cluster: Cys304, Cys307, Cys315, and Cys318. Short sequence motifs (cx2C motif) lie at residues 304 to 307 and 315 to 318; these read CGSC and CDGC. The fe-S binding site B stretch occupies residues 304 to 318; the sequence is CGSCALGDAFRCDGC.

The protein belongs to the anamorsin family. Monomer. Interacts with TAH18. Interacts with MIA40. [2Fe-2S] cluster serves as cofactor. It depends on [4Fe-4S] cluster as a cofactor.

The protein localises to the cytoplasm. The protein resides in the mitochondrion intermembrane space. Its function is as follows. Component of the cytosolic iron-sulfur (Fe-S) protein assembly (CIA) machinery required for the maturation of extramitochondrial Fe-S proteins. Part of an electron transfer chain functioning in an early step of cytosolic Fe-S biogenesis, facilitating the de novo assembly of a [4Fe-4S] cluster on the scaffold complex CFD1-NBP35. Electrons are transferred to DRE2 from NADPH via the FAD- and FMN-containing protein TAH18. TAH18-DRE2 are also required for the assembly of the diferric tyrosyl radical cofactor of ribonucleotide reductase (RNR), probably by providing electrons for reduction during radical cofactor maturation in the catalytic small subunit RNR2. This is Fe-S cluster assembly protein DRE2 from Komagataella phaffii (strain GS115 / ATCC 20864) (Yeast).